We begin with the raw amino-acid sequence, 326 residues long: Putative [LysW]-lysine/[LysW]-ornithine hydrolase (326 aa).

Zn(2+) is bound at residue His-66. Residue Asp-68 is part of the active site. Asp-90 lines the Zn(2+) pocket. Residue Glu-117 is the Proton acceptor of the active site. The Zn(2+) site is built by Glu-118, Glu-139, and His-297.

Belongs to the peptidase M20A family. LysK subfamily. It depends on Zn(2+) as a cofactor. The cofactor is Co(2+).

It is found in the cytoplasm. It carries out the reaction [amino-group carrier protein]-C-terminal-gamma-(L-lysyl)-L-glutamate + H2O = [amino-group carrier protein]-C-terminal-L-glutamate + L-lysine. The enzyme catalyses [amino-group carrier protein]-C-terminal-gamma-(L-ornithyl)-L-glutamate + H2O = [amino-group carrier protein]-C-terminal-L-glutamate + L-ornithine. It functions in the pathway amino-acid biosynthesis; L-lysine biosynthesis via AAA pathway; L-lysine from L-alpha-aminoadipate (Thermus route): step 5/5. Its pathway is amino-acid biosynthesis; L-arginine biosynthesis. In terms of biological role, catalyzes the release of L-lysine from [LysW]-gamma-L-lysine and the release of L-ornithine from [LysW]-L-ornithine. This Pyrococcus furiosus (strain ATCC 43587 / DSM 3638 / JCM 8422 / Vc1) protein is Putative [LysW]-lysine/[LysW]-ornithine hydrolase.